Consider the following 329-residue polypeptide: DNA-directed RNA polymerase subunit alpha (329 aa).

Residues 1–235 (MQGSVTEFLK…EQLEAFVDLR (235 aa)) are alpha N-terminal domain (alpha-NTD). The interval 249-329 (FDPILLRPVD…NWPPASIADE (81 aa)) is alpha C-terminal domain (alpha-CTD).

This sequence belongs to the RNA polymerase alpha chain family. Homodimer. The RNAP catalytic core consists of 2 alpha, 1 beta, 1 beta' and 1 omega subunit. When a sigma factor is associated with the core the holoenzyme is formed, which can initiate transcription.

The catalysed reaction is RNA(n) + a ribonucleoside 5'-triphosphate = RNA(n+1) + diphosphate. DNA-dependent RNA polymerase catalyzes the transcription of DNA into RNA using the four ribonucleoside triphosphates as substrates. This Yersinia pestis bv. Antiqua (strain Antiqua) protein is DNA-directed RNA polymerase subunit alpha.